Here is a 506-residue protein sequence, read N- to C-terminus: H/ACA ribonucleoprotein complex subunit DKC1 (506 aa).

Positions 1–26 are disordered; that stretch reads MADTESKKEKKRKSKKISDEEVGDIQ. The Nucleophile role is filled by D120. The PUA domain occupies 291 to 366; that stretch reads HKRIVMKDSA…VVAKIKRVIM (76 aa). Disordered stretches follow at residues 391-410 and 419-506; these read GLLD…WKEG and VKKG…ADSD. Over residues 421–434 the composition is skewed to basic and acidic residues; it reads KGGEASAKRKRDES. Over residues 457–466 the composition is skewed to basic residues; that stretch reads EKKKKKKEKK.

The protein belongs to the pseudouridine synthase TruB family. As to quaternary structure, part of the H/ACA small nucleolar ribonucleoprotein (H/ACA snoRNP) complex. The complex binds a box H/ACA small nucleolar RNA (snoRNA), which may target the specific site of modification within the RNA substrate.

The protein localises to the nucleus. The protein resides in the nucleolus. It localises to the cajal body. The catalysed reaction is uridine in 5S rRNA = pseudouridine in 5S rRNA. In terms of biological role, catalytic subunit of H/ACA small nucleolar ribonucleoprotein (H/ACA snoRNP) complex, which catalyzes pseudouridylation of rRNA. This involves the isomerization of uridine such that the ribose is subsequently attached to C5, instead of the normal N1. Pseudouridine ('psi') residues may serve to stabilize the conformation of rRNAs. Required for ribosome biogenesis and telomere maintenance. This is H/ACA ribonucleoprotein complex subunit DKC1 from Danio rerio (Zebrafish).